The chain runs to 498 residues: ATP synthase subunit beta, chloroplastic (498 aa).

172-179 (GGAGVGKT) contacts ATP.

Belongs to the ATPase alpha/beta chains family. As to quaternary structure, F-type ATPases have 2 components, CF(1) - the catalytic core - and CF(0) - the membrane proton channel. CF(1) has five subunits: alpha(3), beta(3), gamma(1), delta(1), epsilon(1). CF(0) has four main subunits: a(1), b(1), b'(1) and c(9-12).

Its subcellular location is the plastid. It is found in the chloroplast thylakoid membrane. The catalysed reaction is ATP + H2O + 4 H(+)(in) = ADP + phosphate + 5 H(+)(out). Produces ATP from ADP in the presence of a proton gradient across the membrane. The catalytic sites are hosted primarily by the beta subunits. The protein is ATP synthase subunit beta, chloroplastic of Calycanthus floridus var. glaucus (Eastern sweetshrub).